The sequence spans 90 residues: DNA-directed RNA polymerase subunit omega (90 aa).

The tract at residues 69-90 is disordered; it reads RQEQQEQDAAELAAVSSITHNR.

The protein belongs to the RNA polymerase subunit omega family. In terms of assembly, the RNAP catalytic core consists of 2 alpha, 1 beta, 1 beta' and 1 omega subunit. When a sigma factor is associated with the core the holoenzyme is formed, which can initiate transcription.

The enzyme catalyses RNA(n) + a ribonucleoside 5'-triphosphate = RNA(n+1) + diphosphate. Promotes RNA polymerase assembly. Latches the N- and C-terminal regions of the beta' subunit thereby facilitating its interaction with the beta and alpha subunits. This is DNA-directed RNA polymerase subunit omega from Aliivibrio salmonicida (strain LFI1238) (Vibrio salmonicida (strain LFI1238)).